We begin with the raw amino-acid sequence, 562 residues long: Potassium-transporting ATPase potassium-binding subunit (562 aa).

A run of 12 helical transmembrane segments spans residues 6–26 (FLLI…LGGF), 62–82 (YALA…VLLM), 132–152 (GLTV…FALI), 175–195 (LYVL…QGVL), 253–273 (FVQM…FGQV), 283–303 (LIWA…YAEL), 327–347 (FGIL…CGAV), 356–376 (ALGG…FGGV), 379–399 (GLYG…LMIG), 416–436 (MTAL…ALAL), 483–503 (LLLA…VLAI), and 526–546 (LFIG…FIPA).

It belongs to the KdpA family. The system is composed of three essential subunits: KdpA, KdpB and KdpC.

The protein resides in the cell inner membrane. Functionally, part of the high-affinity ATP-driven potassium transport (or Kdp) system, which catalyzes the hydrolysis of ATP coupled with the electrogenic transport of potassium into the cytoplasm. This subunit binds the periplasmic potassium ions and delivers the ions to the membrane domain of KdpB through an intramembrane tunnel. The protein is Potassium-transporting ATPase potassium-binding subunit of Yersinia pseudotuberculosis serotype IB (strain PB1/+).